The following is a 185-amino-acid chain: ADP-ribose 1''-phosphate phosphatase (185 aa).

Residues 1–185 (MSPARLRITD…VVEVVAWERA (185 aa)) enclose the Macro domain. Substrate-binding positions include 13–15 (GDL), 27–29 (ACN), 34–39 (WGGGIA), and 142–148 (INAGLFA).

The protein belongs to the POA1 family.

The enzyme catalyses ADP-alpha-D-ribose 1''-phosphate + H2O = ADP-D-ribose + phosphate. Highly specific phosphatase involved in the metabolism of ADP-ribose 1''-phosphate (Appr1p) which is produced as a consequence of tRNA splicing. The sequence is that of ADP-ribose 1''-phosphate phosphatase (POA1) from Chaetomium globosum (strain ATCC 6205 / CBS 148.51 / DSM 1962 / NBRC 6347 / NRRL 1970) (Soil fungus).